The chain runs to 266 residues: Killer cell lectin-like receptor 6 (266 aa).

The Cytoplasmic portion of the chain corresponds to 1-44 (MSEPEVTYSTVRLHKSSRLQKLVRHEETQGPREAGYRKCSVCWQ). Residues 45–66 (LIVKALGILCFLLLITVAVLAV) form a helical; Signal-anchor for type II membrane protein membrane-spanning segment. The Extracellular portion of the chain corresponds to 67–266 (KIFQYGQHNQ…CGKKLDKFPH (200 aa)). Residues Asn87 and Asn104 are each glycosylated (N-linked (GlcNAc...) asparagine). The C-type lectin domain occupies 143 to 261 (GVKYWFCYRT…SHYCICGKKL (119 aa)). Cystine bridges form between Cys149-Cys154, Cys167-Cys255, Cys171-Cys257, and Cys236-Cys249.

In terms of assembly, homodimer; disulfide-linked.

The protein localises to the membrane. Its function is as follows. Receptor on natural killer (NK) cells for class I MHC. The sequence is that of Killer cell lectin-like receptor 6 (Klra6) from Mus musculus (Mouse).